Reading from the N-terminus, the 424-residue chain is Elongation factor 1-alpha (424 aa).

In terms of domain architecture, tr-type G spans 5–223; the sequence is KPHLNLITIG…DAFKVPEKPI (219 aa). The G1 stretch occupies residues 14–21; sequence GHVDHGKS. 14 to 21 contributes to the GTP binding site; sequence GHVDHGKS. Serine 21 serves as a coordination point for Mg(2+). The tract at residues 70-74 is G2; the sequence is GVTID. Positions 91-94 are G3; it reads DAPG. GTP contacts are provided by residues 91–95 and 148–151; these read DAPGH and NKMD. A G4 region spans residues 148–151; sequence NKMD. The G5 stretch occupies residues 187–189; that stretch reads SGY.

This sequence belongs to the TRAFAC class translation factor GTPase superfamily. Classic translation factor GTPase family. EF-Tu/EF-1A subfamily.

It is found in the cytoplasm. It catalyses the reaction GTP + H2O = GDP + phosphate + H(+). GTP hydrolase that promotes the GTP-dependent binding of aminoacyl-tRNA to the A-site of ribosomes during protein biosynthesis. The protein is Elongation factor 1-alpha of Thermoplasma acidophilum (strain ATCC 25905 / DSM 1728 / JCM 9062 / NBRC 15155 / AMRC-C165).